The following is a 543-amino-acid chain: MTVANHARPIRRALLSVSDKTGILEFAKALHAQGVELLSTGGTARLLADNGVPVIEVSDYTGHPEIMDGRVKTLHPKVHGGILARRGLDENVMAANNINAIDLVAVNLYPFADTVAKAGCTLEDAIENIDIGGPTMVRAAAKNHKDVTIVVNAADYNRVLAEMAVNNGSTTHATRFDLAIAAFEHTAGYDGMIANYFGTMVPMHRVPAHSTDECFQDSLSVEGSKFPRTFNTQLVKKQDLRYGENSHQAAAFYVDTKIDEASVATAVQLQGKALSYNNIADTDAALECVKEFSEPACVIVKHANPCGVALGKDLLDAYNRAYQTDPTSAFGGIIAFNGELDAATASAIVERQFVEVIIAPVVSQGARDVVAKKTNVRLLECGQWNTKTQTLDYKRVNGGLLVQDRDQGMVGLDDIKVVTKRQPTESELKDLMFCWKVAKFVKSNAIVYAKDGMTIGVGAGQMSRVYSAKIAGIKAADEGLEVVNSVMASDAFFPFRDGIDAAAAAGISCIIQPGGSMRDAEIIAAADEHGMAMVMTGMRHFRH.

Residues 5–151 form the MGS-like domain; the sequence is NHARPIRRAL…KNHKDVTIVV (147 aa).

It belongs to the PurH family.

The catalysed reaction is (6R)-10-formyltetrahydrofolate + 5-amino-1-(5-phospho-beta-D-ribosyl)imidazole-4-carboxamide = 5-formamido-1-(5-phospho-D-ribosyl)imidazole-4-carboxamide + (6S)-5,6,7,8-tetrahydrofolate. The enzyme catalyses IMP + H2O = 5-formamido-1-(5-phospho-D-ribosyl)imidazole-4-carboxamide. Its pathway is purine metabolism; IMP biosynthesis via de novo pathway; 5-formamido-1-(5-phospho-D-ribosyl)imidazole-4-carboxamide from 5-amino-1-(5-phospho-D-ribosyl)imidazole-4-carboxamide (10-formyl THF route): step 1/1. It participates in purine metabolism; IMP biosynthesis via de novo pathway; IMP from 5-formamido-1-(5-phospho-D-ribosyl)imidazole-4-carboxamide: step 1/1. The chain is Bifunctional purine biosynthesis protein PurH from Shewanella oneidensis (strain ATCC 700550 / JCM 31522 / CIP 106686 / LMG 19005 / NCIMB 14063 / MR-1).